The chain runs to 179 residues: Guanosine-3',5'-bis(diphosphate) 3'-pyrophosphohydrolase MESH1 (179 aa).

Residues 32–127 (YINHPLGVAR…VKLADKLYNL (96 aa)) enclose the HD domain. Mn(2+) contacts are provided by His-35, His-61, and Asp-62. Catalysis depends on nucleophile residues Glu-65 and Asp-66. Asp-122 contacts Mn(2+).

This sequence belongs to the MESH1 family. Requires Mn(2+) as cofactor.

The catalysed reaction is guanosine 3',5'-bis(diphosphate) + H2O = GDP + diphosphate + H(+). Its function is as follows. ppGpp hydrolyzing enzyme involved in starvation response. This is Guanosine-3',5'-bis(diphosphate) 3'-pyrophosphohydrolase MESH1 (hddc3) from Xenopus tropicalis (Western clawed frog).